The chain runs to 279 residues: Putative pyruvate, phosphate dikinase regulatory protein (279 aa).

152 to 159 is a binding site for ADP; sequence GVSRTSKS.

It belongs to the pyruvate, phosphate/water dikinase regulatory protein family. PDRP subfamily.

It catalyses the reaction N(tele)-phospho-L-histidyl/L-threonyl-[pyruvate, phosphate dikinase] + ADP = N(tele)-phospho-L-histidyl/O-phospho-L-threonyl-[pyruvate, phosphate dikinase] + AMP + H(+). The catalysed reaction is N(tele)-phospho-L-histidyl/O-phospho-L-threonyl-[pyruvate, phosphate dikinase] + phosphate + H(+) = N(tele)-phospho-L-histidyl/L-threonyl-[pyruvate, phosphate dikinase] + diphosphate. Its function is as follows. Bifunctional serine/threonine kinase and phosphorylase involved in the regulation of the pyruvate, phosphate dikinase (PPDK) by catalyzing its phosphorylation/dephosphorylation. In Anaplasma marginale (strain Florida), this protein is Putative pyruvate, phosphate dikinase regulatory protein.